We begin with the raw amino-acid sequence, 113 residues long: Protein translation factor SUI1 homolog (113 aa).

The segment at 1 to 24 (MSELDSQVPTAFDPFADANAEDSG) is disordered. Position 2 is an N-acetylserine (Ser2).

This sequence belongs to the SUI1 family.

In terms of biological role, probably involved in translation. This Brassica oleracea (Wild cabbage) protein is Protein translation factor SUI1 homolog.